A 200-amino-acid polypeptide reads, in one-letter code: TATA-box-binding protein (200 aa).

Repeat copies occupy residues 25 to 101 (LQNI…ARII) and 115 to 192 (IQNI…YPVL).

Belongs to the TBP family. As to quaternary structure, belongs to the TFIID complex together with the TBP-associated factors (TAFs). Binds DNA as monomer.

It is found in the nucleus. Its function is as follows. General transcription factor that functions at the core of the DNA-binding multiprotein factor TFIID. Binding of TFIID to the TATA box is the initial transcriptional step of the pre-initiation complex (PIC), playing a role in the activation of eukaryotic genes transcribed by RNA polymerase II. This chain is TATA-box-binding protein, found in Nicotiana tabacum (Common tobacco).